The following is a 65-amino-acid chain: SPbeta prophage-derived uncharacterized protein YorO (65 aa).

The sequence is that of SPbeta prophage-derived uncharacterized protein YorO (yorO) from Bacillus subtilis (strain 168).